A 1075-amino-acid chain; its full sequence is Ataxin-2-like protein (1075 aa).

Position 1 is an N-acetylmethionine (Met1). The span at 1–12 (MLKPQPLQQPSQ) shows a compositional bias: low complexity. The interval 1-115 (MLKPQPLQQP…KGPPQSPVFE (115 aa)) is disordered. The interaction with MPL stretch occupies residues 98-121 (SARGQSTGKGPPQSPVFEGVYNNS). A phosphoserine mark is found at Ser103 and Ser111. The residue at position 118 (Tyr118) is a Phosphotyrosine. One can recognise a Sm domain in the interval 122–199 (RMLHFLTAVV…VMLVHFRNVD (78 aa)). At Lys207 the chain carries N6-acetyllysine. Ser238 bears the Phosphoserine mark. Phosphotyrosine is present on Tyr264. Ser306 bears the Phosphoserine mark. Tyr309 is subject to Phosphotyrosine. Basic and acidic residues predominate over residues 316–328 (ENDDGRTEEEKHS). 6 disordered regions span residues 316–521 (ENDD…LEPQ), 551–697 (QFKL…SIPV), 733–770 (VSNS…MMQA), 820–849 (SNPR…EQPT), 865–940 (ATQL…SSFP), and 1022–1045 (PYIG…ADDR). Over residues 330-342 (VQRQGSGRESPSL) the composition is skewed to polar residues. Residues Ser335 and Ser339 each carry the phosphoserine modification. Residue Lys348 forms a Glycyl lysine isopeptide (Lys-Gly) (interchain with G-Cter in SUMO2) linkage. Phosphotyrosine is present on Tyr349. Arg361 carries the post-translational modification Asymmetric dimethylarginine. Low complexity predominate over residues 363 to 380 (GVRCSSSRGGRPGLSSLP). Residues Ser391 and Ser409 each carry the phosphoserine modification. Positions 421–433 (TLSSPSNRPSGET) are enriched in polar residues. A Phosphoserine modification is found at Ser449. 2 stretches are compositionally biased toward low complexity: residues 450–462 (PKSA…SASC) and 471–485 (VPTS…SSVS). Phosphoserine occurs at positions 493 and 496. A compositionally biased stretch (basic and acidic residues) spans 505 to 516 (DVKELSTKEPGR). Ser557, Ser558, Ser559, and Ser563 each carry phosphoserine. Positions 571–584 (ILKEEPKGKEKEVD) are enriched in basic and acidic residues. Ser594 bears the Phosphoserine mark. Position 632 is a phosphothreonine (Thr632). 4 positions are modified to phosphoserine: Ser634, Ser674, Ser680, and Ser684. Low complexity-rich tracts occupy residues 678–694 (STST…STPS) and 761–770 (PASAPPMMQA). The segment covering 874 to 898 (QPATTPTGSQPQSQHAAPSPVQHQA) has biased composition (polar residues). 2 stretches are compositionally biased toward low complexity: residues 931 to 940 (SAQSPQSSFP) and 1025 to 1037 (GHPQ…QAPG).

Belongs to the ataxin-2 family. As to quaternary structure, interacts with MPL/TPOR and EPOR and dissociates after ligand stimulation. Interacts with DDX6, G3BP1, and ATXN2. Interacts with PRMT1. Interacts with CIC and ATXN1. In terms of processing, thrombopoietin triggers the phosphorylation on tyrosine residues in a way that is dependent on MPL C-terminal domain. Post-translationally, asymmetrically dimethylated. Probably methylated by PRMT1. As to expression, expressed at high levels in thymus, lymph node, spleen, fetal kidney and adult testis. Constitutively associated with MPL and EPOR in hematopoietic cells.

The protein resides in the membrane. It localises to the cytoplasm. It is found in the nucleus speckle. Its subcellular location is the cytoplasmic granule. Its function is as follows. Involved in the regulation of stress granule and P-body formation. In Homo sapiens (Human), this protein is Ataxin-2-like protein (ATXN2L).